The sequence spans 416 residues: MKKILERSMEGSGTWQGLVLVGIVTWICASSYLKFTHKFRSLLQPWVARQVVGGVPLILRIQKCQNGVLDAFFSGLSCVVSVPFYTAFLPLLFWSGHGRLARQMTLLIAFCDYLGNCIKDVVSAPRPSCPPVRRITATKDEEDNAMEYGLPSSHTLNTVCLSGYLLHYVLSSLEYESVSIQYYGFALACLLVALIAFGRVYLGMHSVVDIVSGLAIGVLILGLWLTVNEKLDDFITSKQNVSSFWTALSFLLLFAYPTPEHPTPSYEYHTAFNGVTLGIVTGVQQTYSQFHHEAAPRIFSPELPISSYLGRVMVGIPTILLVKFCSKSLAKWTLPMVSNALGIPIRSSMYIPKLKGYASGKKTDEPKNSVGYLQKLCEFLSHDSFDIDTGIRFFQYAGLAWSVVDLVPSLFSYVNL.

2 helical membrane-spanning segments follow: residues 72-92 (FFSG…LPLL) and 104-124 (MTLL…VVSA). The segment at 119–127 (KDVVSAPRP) is phosphatase sequence motif I. The tract at residues 151–154 (PSSH) is phosphatase sequence motif II. Catalysis depends on His154, which acts as the Proton donor. Residues 178–198 (VSIQYYGFALACLLVALIAFG) form a helical membrane-spanning segment. Positions 198 to 209 (GRVYLGMHSVVD) are phosphatase sequence motif III. Residue His205 is the Nucleophile of the active site. 5 helical membrane-spanning segments follow: residues 207–227 (VVDI…WLTV), 241–261 (VSSF…TPEH), 266–286 (YEYH…VQQT), 302–322 (ELPI…ILLV), and 393–413 (FFQY…LFSY).

Belongs to the type 2 lipid phosphate phosphatase family.

The protein localises to the endoplasmic reticulum membrane. Functionally, functions as a sphingoid long-chain base phosphate (LCBP) phosphatase. May play a role in the regulation of LCBP levels and be involved in stomatal responses through LCBP-mediated ABA signaling. This chain is Lipid phosphate phosphatase delta (LPPD), found in Arabidopsis thaliana (Mouse-ear cress).